The following is a 103-amino-acid chain: Nucleoid-associated protein SUN_2278 (103 aa).

It belongs to the YbaB/EbfC family. Homodimer.

The protein localises to the cytoplasm. It is found in the nucleoid. Its function is as follows. Binds to DNA and alters its conformation. May be involved in regulation of gene expression, nucleoid organization and DNA protection. The chain is Nucleoid-associated protein SUN_2278 from Sulfurovum sp. (strain NBC37-1).